A 119-amino-acid polypeptide reads, in one-letter code: Large ribosomal subunit protein bL20 (119 aa).

It belongs to the bacterial ribosomal protein bL20 family.

In terms of biological role, binds directly to 23S ribosomal RNA and is necessary for the in vitro assembly process of the 50S ribosomal subunit. It is not involved in the protein synthesizing functions of that subunit. This chain is Large ribosomal subunit protein bL20, found in Latilactobacillus sakei subsp. sakei (strain 23K) (Lactobacillus sakei subsp. sakei).